The following is a 117-amino-acid chain: Acylphosphatase (117 aa).

The Acylphosphatase-like domain maps to 21–107; the sequence is RWRFRIRGLV…TGADWFEIRP (87 aa). Residues Arg-36 and Asn-54 contribute to the active site.

It belongs to the acylphosphatase family.

The catalysed reaction is an acyl phosphate + H2O = a carboxylate + phosphate + H(+). This Synechococcus sp. (strain RCC307) protein is Acylphosphatase (acyP).